The chain runs to 137 residues: Nucleoside diphosphate kinase (137 aa).

ATP contacts are provided by lysine 9, phenylalanine 57, arginine 85, threonine 91, arginine 102, and asparagine 112. Histidine 115 serves as the catalytic Pros-phosphohistidine intermediate.

Belongs to the NDK family. As to quaternary structure, homotetramer. It depends on Mg(2+) as a cofactor.

Its subcellular location is the cytoplasm. It catalyses the reaction a 2'-deoxyribonucleoside 5'-diphosphate + ATP = a 2'-deoxyribonucleoside 5'-triphosphate + ADP. The enzyme catalyses a ribonucleoside 5'-diphosphate + ATP = a ribonucleoside 5'-triphosphate + ADP. In terms of biological role, major role in the synthesis of nucleoside triphosphates other than ATP. The ATP gamma phosphate is transferred to the NDP beta phosphate via a ping-pong mechanism, using a phosphorylated active-site intermediate. The protein is Nucleoside diphosphate kinase of Helicobacter hepaticus (strain ATCC 51449 / 3B1).